The sequence spans 123 residues: Unknown 12C protein (123 aa).

The first 17 residues, 1-17 (MMSALFLVLSVSLLVSG), serve as a signal peptide directing secretion.

In terms of processing, contains 6 disulfide bonds. In terms of tissue distribution, expressed in acontia, a specialised envenomation structure laden with batteries of venom-containing nematocysts found only in the superfamily Metridioidea.

The protein localises to the secreted. It is found in the nematocyst. Functionally, cysteine-rich protein with probable toxin activity. This is Unknown 12C protein from Calliactis polypus (Hermit crab anemone).